Here is a 193-residue protein sequence, read N- to C-terminus: Protein GrpE (193 aa).

Basic and acidic residues predominate over residues 1–22 (MDPKEKEKMAEELNVEETKDTA). The segment at 1 to 45 (MDPKEKEKMAEELNVEETKDTAEEQPQDDQAEEAAPLTHEEQLEK) is disordered. A compositionally biased stretch (acidic residues) spans 23 to 32 (EEQPQDDQAE).

Belongs to the GrpE family. In terms of assembly, homodimer.

Its subcellular location is the cytoplasm. Its function is as follows. Participates actively in the response to hyperosmotic and heat shock by preventing the aggregation of stress-denatured proteins, in association with DnaK and GrpE. It is the nucleotide exchange factor for DnaK and may function as a thermosensor. Unfolded proteins bind initially to DnaJ; upon interaction with the DnaJ-bound protein, DnaK hydrolyzes its bound ATP, resulting in the formation of a stable complex. GrpE releases ADP from DnaK; ATP binding to DnaK triggers the release of the substrate protein, thus completing the reaction cycle. Several rounds of ATP-dependent interactions between DnaJ, DnaK and GrpE are required for fully efficient folding. This chain is Protein GrpE, found in Bacteroides thetaiotaomicron (strain ATCC 29148 / DSM 2079 / JCM 5827 / CCUG 10774 / NCTC 10582 / VPI-5482 / E50).